The primary structure comprises 108 residues: uncharacterized protein (108 aa).

Belongs to the baculoviridae 11 kDa protein family.

This is an uncharacterized protein from Orgyia pseudotsugata (Douglas-fir tussock moth).